We begin with the raw amino-acid sequence, 21 residues long: Thylakoid lumenal 13.8 kDa protein (21 aa).

It localises to the plastid. The protein resides in the chloroplast thylakoid lumen. This Spinacia oleracea (Spinach) protein is Thylakoid lumenal 13.8 kDa protein.